Here is a 356-residue protein sequence, read N- to C-terminus: Cysteine proteinase 3 (356 aa).

The first 16 residues, 1 to 16 (MSRLSLVLILVAGLFA), serve as a signal peptide directing secretion. Positions 17 to 138 (TALAGPATFA…KGNLKLTNVV (122 aa)) are cleaved as a propeptide — activation peptide. N-linked (GlcNAc...) asparagine glycosylation is present at Asn-123. Cystine bridges form between Cys-160–Cys-203 and Cys-194–Cys-236. Cys-163 is a catalytic residue. N-linked (GlcNAc...) asparagine glycosylation occurs at Asn-252. Cys-294 and Cys-344 are disulfide-bonded. Catalysis depends on residues His-303 and Asn-323.

It belongs to the peptidase C1 family. As to expression, predominantly expressed in stem and root.

The protein resides in the vacuole. This is Cysteine proteinase 3 (CYP-3) from Solanum lycopersicum (Tomato).